The sequence spans 361 residues: Epi-isozizaene synthase (361 aa).

Positions 99, 103, 240, 244, and 248 each coordinate Mg(2+). A DDXXD motif motif is present at residues 99 to 103 (DDRHD).

The protein belongs to the terpene synthase family. Mg(2+) serves as cofactor. The cofactor is Mn(2+). It depends on Fe(3+) as a cofactor.

The catalysed reaction is (2E,6E)-farnesyl diphosphate = (+)-epi-isozizaene + diphosphate. It functions in the pathway sesquiterpene biosynthesis; epi-isozizaene biosynthesis. Catalyzes the cyclization of farnesyl diphosphate (FPP) to the sesquiterpene epi-isozizaene. This Streptomyces coelicolor (strain ATCC BAA-471 / A3(2) / M145) protein is Epi-isozizaene synthase (cyc1).